Here is a 178-residue protein sequence, read N- to C-terminus: uncharacterized protein (178 aa).

This sequence belongs to the mimivirus L39/R874 family.

This is an uncharacterized protein from Acanthamoeba polyphaga (Amoeba).